We begin with the raw amino-acid sequence, 268 residues long: Microtubule-associated protein RP/EB family member 1 (268 aa).

N-acetylalanine is present on Ala-2. Positions 14-116 constitute a Calponin-homology (CH) domain; sequence NLSRHDMLAW…FVQWFKKFFD (103 aa). Residue Lys-66 is modified to N6-crotonyllysine. Tyr-124 carries the post-translational modification Phosphotyrosine. The interval 124-268 is interaction with MTUS2/TIP150; sequence YDPVAARQGQ…GGPQEEQEEY (145 aa). The interval 146-191 is disordered; the sequence is LSKPKKPLGSGSAAPQRPIATQRTTAAPKAGPGMVRKNPGMGNGDD. A Phosphoserine modification is found at Ser-155. An EB1 C-terminal domain is found at 185–255; the sequence is GMGNGDDEAA…LYATDEGFVI (71 aa). Residues 206–211 are interaction with APC; the sequence is TVEDLE. The segment at 208-268 is DCTN1-binding; sequence EDLEKERDFY…GGPQEEQEEY (61 aa). Residue Lys-220 is modified to N6-acetyllysine. Residues 220-242 form an APC-binding region; that stretch reads KLRNIELICQENEGENDPVLQRI. The segment at 232–255 is interaction with SKA1; that stretch reads EGENDPVLQRIVDILYATDEGFVI.

This sequence belongs to the MAPRE family. In terms of assembly, homodimer. Heterodimer with MAPRE3. Interacts with DCTN1, DCTN2, TERF1 and dynein intermediate chain. Interaction with DIAPH1 and DIAPH2. Interacts (via C-terminal residues 206-211) with APC (via C-terminal residues 2674-2845); the interaction inhibits association with and bundling of F-actin. Interacts with CLASP2, DST, KIF2C and STIM1; probably required for their targeting to the growing microtubule plus ends. Interacts with MTUS2; interaction is direct and probably targets MTUS2 to microtubules. Interacts (via C-terminus) with SKA1 (via SXIP motif); the interaction is direct and stabilizes the kinetochore-microtubule attachment of the SKA1 complex. Interacts with APC2. Interacts with CLASP1. Interacts with CDK5RAP2. According to another report, MAPRE1 does not interact with CDK5RAP2. Interacts with MACF1. Interacts with RABL2/RABL2A; binds preferentially to GTP-bound RABL2. Interacts with KCNAB2. Interacts (via C-terminus) with CLIP1. Interacts with SLAIN2 and SLAIN1. Interacts with KIF18B; this interaction is required for efficient accumulation of KIF18B at microtubule plus ends. Interacts with MISP. Interacts with KNSTRN. Interacts with NCKAP5L. Interacts with AKAP9. Interacts with PDE4DIP; this interaction, which is PDE4DIP isoform-specific, is required for its recruitment to the Golgi apparatus. Interacts with CAMSAP2. May form a pericentrosomal complex with AKAP9, CDK5RAP2 and PDE4DIP isoform 2/MMG8/SMYLE; within this complex, MAPRE1 binding to CDK5RAP2 may be mediated by PDE4DIP. Contrary to other mammalian species, does not interact with CDK5RAP2, possibly due to the lack of conservation of the MAPRE1-binding motif in rat CDK5RAP2. Interacts with AKNA. Interacts with GAS2L1, GAS2L2, and GAS2L3. Interacts with RARRES1 and AGBL2. Post-translationally, acetylation at Lys-220 by KAT2B/PCAF promotes dynamic kinetochore-microtubule interactions in early mitosis. Crotonylated by KAT5 during mitosis, promoting astral microtubule plasticity and dynamic connection between astral microtubules and the cortex during mitotic chromosome segregation, thereby ensuring accurate spindle positioning in mitosis. Decrotonylated by HDAC3.

The protein resides in the cytoplasm. The protein localises to the cytoskeleton. It localises to the microtubule organizing center. It is found in the centrosome. Its subcellular location is the golgi apparatus. The protein resides in the spindle. The protein localises to the spindle pole. Its function is as follows. Plus-end tracking protein (+TIP) that binds to the plus-end of microtubules and regulates the dynamics of the microtubule cytoskeleton. Recruits other +TIP proteins to microtubules by binding to a conserved Ser-X-Leu-Pro (SXLP) motif in their polypeptide chains. Promotes cytoplasmic microtubule nucleation and elongation. Involved in mitotic spindle positioning by stabilizing microtubules and promoting dynamic connection between astral microtubules and the cortex during mitotic chromosome segregation. Assists chromosome alignment in metaphase by recruiting the SKA complex to the spindle and stabilizing its interactions with microtubule bundles (K-fibers). Also acts as a regulator of minus-end microtubule organization: interacts with the complex formed by AKAP9 and PDE4DIP, leading to recruit CAMSAP2 to the Golgi apparatus, thereby tethering non-centrosomal minus-end microtubules to the Golgi, an important step for polarized cell movement. Promotes elongation of CAMSAP2-decorated microtubule stretches on the minus-end of microtubules. Acts as a regulator of autophagosome transport via interaction with CAMSAP2. Functions downstream of Rho GTPases and DIAPH1 in stable microtubule formation. May play a role in cell migration. The chain is Microtubule-associated protein RP/EB family member 1 (Mapre1) from Rattus norvegicus (Rat).